Consider the following 444-residue polypeptide: RAC family serine/threonine-protein kinase homolog (444 aa).

Residues 5 to 100 enclose the PH domain; the sequence is PIKHEGFLTK…WIEILINERE (96 aa). Positions 120–374 constitute a Protein kinase domain; the sequence is FELLNLVGKG…PNLIKRHPFF (255 aa). Residues 126–134 and Lys-149 each bind ATP; that span reads VGKGSFGKV. Asp-243 serves as the catalytic Proton acceptor. Thr-278 is subject to Phosphothreonine. The AGC-kinase C-terminal domain maps to 375–444; it reads RSIDWEQLFQ…TYVAESEHLR (70 aa).

Belongs to the protein kinase superfamily. AGC Ser/Thr protein kinase family. RAC subfamily.

It carries out the reaction L-seryl-[protein] + ATP = O-phospho-L-seryl-[protein] + ADP + H(+). The catalysed reaction is L-threonyl-[protein] + ATP = O-phospho-L-threonyl-[protein] + ADP + H(+). Predominantly involved during the aggregation to control cell polarity and chemotaxis. Phosphorylates talB, gefN, gefS, PI4P 5-kinase and gacQ. This is RAC family serine/threonine-protein kinase homolog (pkbA) from Dictyostelium discoideum (Social amoeba).